The following is a 155-amino-acid chain: DNA gyrase inhibitor (155 aa).

The protein belongs to the DNA gyrase inhibitor family. Interacts with DNA gyrase.

The protein localises to the cytoplasm. Functionally, inhibits the supercoiling activity of DNA gyrase. Acts by inhibiting DNA gyrase at an early step, prior to (or at the step of) binding of DNA by the gyrase. It protects cells against toxins that target DNA gyrase, by inhibiting activity of these toxins and reducing the formation of lethal double-strand breaks in the cell. The sequence is that of DNA gyrase inhibitor from Edwardsiella ictaluri (strain 93-146).